Consider the following 309-residue polypeptide: MTLMKPRLSREMAEAIAAGSPVVALESTIITHGMPYPANLETALGVETVIRENGAIPATIAVVKGELRVGLEHDELEELAQSKGIVKASGRDLAVAMIRGQSAGTTVSATMLMADLAGIDVFATGGVGGVHRGAEQTFDISADLTELGRTKTAVVCAGVKSILDIAKTLEYLETQRVPVIAYGTEDFPAFFTRRSGFKADHRLDTPEEIAKAMWLHHQLGTGTGLLIANPIPEASALAPDFIDGTIADAVRDADERGIDRKELTPFLLARINELTKGESLKANIELVKNNARLAARIAVAYAPLKKARN.

The Proton donor role is filled by Glu-26. Positions 87 and 107 each coordinate substrate. Mn(2+) is bound at residue Asp-139. 141 to 143 (SAD) is a binding site for substrate. The active-site Nucleophile is the Lys-160.

This sequence belongs to the pseudouridine-5'-phosphate glycosidase family. In terms of assembly, homotrimer. It depends on Mn(2+) as a cofactor.

The enzyme catalyses D-ribose 5-phosphate + uracil = psi-UMP + H2O. Catalyzes the reversible cleavage of pseudouridine 5'-phosphate (PsiMP) to ribose 5-phosphate and uracil. Functions biologically in the cleavage direction, as part of a pseudouridine degradation pathway. This Rhizobium johnstonii (strain DSM 114642 / LMG 32736 / 3841) (Rhizobium leguminosarum bv. viciae) protein is Pseudouridine-5'-phosphate glycosidase 2.